A 162-amino-acid polypeptide reads, in one-letter code: MRISKPHLRSVSIQCYLCLLLNSHFLTEAGIHVFILGCFSAGLPKTEANWVNVISDLKKIEDLIQSMHIDATLYTESDVHPSCKVTAMKCFLLELQVISHESGDTDIHDTVENLIILANNILSSNGNITESGCKECEELEEKNIKEFLQSFVHIVQMFINTS.

A signal peptide spans 1–29 (MRISKPHLRSVSIQCYLCLLLNSHFLTEA). Residues 30 to 48 (GIHVFILGCFSAGLPKTEA) constitute a propeptide that is removed on maturation. 2 disulfide bridges follow: cysteine 83–cysteine 133 and cysteine 90–cysteine 136. N-linked (GlcNAc...) asparagine glycosylation occurs at asparagine 127.

This sequence belongs to the IL-15/IL-21 family.

Its subcellular location is the secreted. Functionally, cytokine that plays a major role in the development of inflammatory and protective immune responses to microbial invaders and parasites by modulating immune cells of both the innate and adaptive immune systems. Stimulates the proliferation of natural killer cells, T-cells and B-cells and promotes the secretion of several cytokines. In monocytes, induces the production of IL8 and monocyte chemotactic protein 1/CCL2, two chemokines that attract neutrophils and monocytes respectively to sites of infection. Unlike most cytokines, which are secreted in soluble form, IL15 is expressed in association with its high affinity IL15RA on the surface of IL15-producing cells and delivers signals to target cells that express IL2RB and IL2RG receptor subunits. Binding to its receptor triggers the phosphorylation of JAK1 and JAK3 and the recruitment and subsequent phosphorylation of signal transducer and activator of transcription-3/STAT3 and STAT5. In mast cells, induces the rapid tyrosine phosphorylation of STAT6 and thereby controls mast cell survival and release of cytokines such as IL4. This is Interleukin-15 (IL15) from Macaca mulatta (Rhesus macaque).